A 237-amino-acid polypeptide reads, in one-letter code: Probable aquaporin SIP2-1 (237 aa).

6 consecutive transmembrane segments (helical) span residues 15-35, 39-59, 71-91, 122-142, 169-189, and 202-222; these read FMWIWAGVLVNILVHGVLGFS, PSGEIVRYLFSIISMFIFAYL, LTALAAGVSGGFSSFIFSVFV, VAIHHGALTEGILTFFIVLLS, ILGSDLTGGCMNPAAVMGWAY, and VYWLGPVKATLLAVWFFKVVF. An NPA 1 motif is present at residues 69–71; that stretch reads NPL. The short motif at 180-182 is the NPA 2 element; sequence NPA.

The protein belongs to the MIP/aquaporin (TC 1.A.8) family. SIP (TC 1.A.8.10) subfamily. As to expression, expressed in dividing cells and elongating regions of the root tips, emerging lateral roots, root steles, cotyledons, main veins of the rosette leaves, vascular tissues of the flower petals, stigma, stamens (anthers and filaments), pollen and the top and bottom (receptacle) of siliques.

The protein resides in the endoplasmic reticulum membrane. Water channel required to facilitate the transport of water across cell membrane. Inactive in yeast cells. This is Probable aquaporin SIP2-1 (SIP2-1) from Arabidopsis thaliana (Mouse-ear cress).